A 408-amino-acid chain; its full sequence is Na(+)-translocating NADH-quinone reductase subunit F (408 aa).

A helical transmembrane segment spans residues 4–24 (VYLGVGMFTAIVLVLVLVILF). A 2Fe-2S ferredoxin-type domain is found at 33–127 (GDIIIGINGD…DMEIELDEEI (95 aa)). [2Fe-2S] cluster-binding residues include C70, C76, C79, and C111. The region spanning 130–270 (IKKWECDVIS…SGPFGEFFAK (141 aa)) is the FAD-binding FR-type domain.

It belongs to the NqrF family. As to quaternary structure, composed of six subunits; NqrA, NqrB, NqrC, NqrD, NqrE and NqrF. The cofactor is [2Fe-2S] cluster. FAD serves as cofactor.

The protein localises to the cell inner membrane. It carries out the reaction a ubiquinone + n Na(+)(in) + NADH + H(+) = a ubiquinol + n Na(+)(out) + NAD(+). Functionally, NQR complex catalyzes the reduction of ubiquinone-1 to ubiquinol by two successive reactions, coupled with the transport of Na(+) ions from the cytoplasm to the periplasm. The first step is catalyzed by NqrF, which accepts electrons from NADH and reduces ubiquinone-1 to ubisemiquinone by a one-electron transfer pathway. This is Na(+)-translocating NADH-quinone reductase subunit F from Shewanella denitrificans (strain OS217 / ATCC BAA-1090 / DSM 15013).